We begin with the raw amino-acid sequence, 503 residues long: Aromatase (503 aa).

3 consecutive transmembrane segments (helical) span residues 19-39 (EVAP…LLVW), 51-71 (GYFL…MGIG), and 303-323 (MLIA…FLIA). Asp309 and Met374 together coordinate substrate. Cys437 serves as a coordination point for heme.

Belongs to the cytochrome P450 family. The cofactor is heme.

It is found in the endoplasmic reticulum membrane. Its subcellular location is the microsome membrane. It catalyses the reaction testosterone + 3 reduced [NADPH--hemoprotein reductase] + 3 O2 = 17beta-estradiol + formate + 3 oxidized [NADPH--hemoprotein reductase] + 4 H2O + 4 H(+). The enzyme catalyses androst-4-ene-3,17-dione + 3 reduced [NADPH--hemoprotein reductase] + 3 O2 = estrone + formate + 3 oxidized [NADPH--hemoprotein reductase] + 4 H2O + 4 H(+). It carries out the reaction androst-4-ene-3,17-dione + reduced [NADPH--hemoprotein reductase] + O2 = 19-hydroxyandrost-4-ene-3,17-dione + oxidized [NADPH--hemoprotein reductase] + H2O + H(+). The catalysed reaction is 19-hydroxyandrost-4-ene-3,17-dione + reduced [NADPH--hemoprotein reductase] + O2 = 19-oxo-androst-4-ene-3,17-dione + oxidized [NADPH--hemoprotein reductase] + 2 H2O + H(+). It catalyses the reaction 19-oxo-androst-4-ene-3,17-dione + reduced [NADPH--hemoprotein reductase] + O2 = estrone + formate + oxidized [NADPH--hemoprotein reductase] + H2O + 2 H(+). The enzyme catalyses estrone + reduced [NADPH--hemoprotein reductase] + O2 = 2-hydroxyestrone + oxidized [NADPH--hemoprotein reductase] + H2O + H(+). It carries out the reaction 17beta-hydroxy-5alpha-androstan-3-one + reduced [NADPH--hemoprotein reductase] + O2 = 17beta,19-dihydroxy-3-oxo-5alpha-androstanone + oxidized [NADPH--hemoprotein reductase] + H2O + H(+). The catalysed reaction is 17beta,19-dihydroxy-3-oxo-5alpha-androstanone + reduced [NADPH--hemoprotein reductase] + O2 = 17beta-hydroxy-3,19-dioxo-5alpha-androstanone + oxidized [NADPH--hemoprotein reductase] + 2 H2O + H(+). It catalyses the reaction 17beta-hydroxy-3,19-dioxo-5alpha-androstanone + reduced [NADPH--hemoprotein reductase] + O2 = 17beta-hydroxy-3-oxo-19-nor-5alpha-androst-1-ene + formate + oxidized [NADPH--hemoprotein reductase] + H2O + 2 H(+). It functions in the pathway steroid hormone biosynthesis. A cytochrome P450 monooxygenase that catalyzes the conversion of C19 androgens, androst-4-ene-3,17-dione (androstenedione) and testosterone to the C18 estrogens, estrone and estradiol, respectively. Catalyzes three successive oxidations of C19 androgens: two conventional oxidations at C19 yielding 19-hydroxy and 19-oxo/19-aldehyde derivatives, followed by a third oxidative aromatization step that involves C1-beta hydrogen abstraction combined with cleavage of the C10-C19 bond to yield a phenolic A ring and formic acid. Alternatively, the third oxidative reaction yields a 19-norsteroid and formic acid. Converts dihydrotestosterone to delta1,10-dehydro 19-nordihydrotestosterone and may play a role in homeostasis of this potent androgen. Also displays 2-hydroxylase activity toward estrone. Mechanistically, uses molecular oxygen inserting one oxygen atom into a substrate, and reducing the second into a water molecule, with two electrons provided by NADPH via cytochrome P450 reductase (CPR; NADPH-ferrihemoprotein reductase). This Leucopleurus acutus (Atlantic white-sided dolphin) protein is Aromatase (CYP19A1).